The following is a 435-amino-acid chain: Hyaluronidase-1 (435 aa).

Residues 1–21 (MAAHLLPICTLFLNLLSVAQG) form the signal peptide. Disulfide bonds link C43–C333 and C207–C221. N-linked (GlcNAc...) asparagine glycosylation is found at N70, N99, N107, and N121. E131 functions as the Proton donor in the catalytic mechanism. 3 N-linked (GlcNAc...) asparagine glycosylation sites follow: N216, N256, and N350. 3 disulfide bridges follow: C358–C369, C363–C418, and C420–C429. An EGF-like domain is found at 418–429 (CRCYPGWRGTWC).

The protein belongs to the glycosyl hydrolase 56 family. In terms of tissue distribution, highly expressed in spleen, kidney, and lung.

Its subcellular location is the secreted. It is found in the lysosome. The catalysed reaction is Random hydrolysis of (1-&gt;4)-linkages between N-acetyl-beta-D-glucosamine and D-glucuronate residues in hyaluronate.. Functionally, may have a role in promoting tumor progression. May block the TGFB1-enhanced cell growth. This Sus scrofa (Pig) protein is Hyaluronidase-1 (HYAL1).